Consider the following 144-residue polypeptide: Large ribosomal subunit protein uL15 (144 aa).

The tract at residues 1–58 (MNLSNLRAPRKANEKKKRVGRGMGSGMGKTSARGHKGQRSRSGSRMMRGFEGGQMPLH) is disordered. The segment covering 8–20 (APRKANEKKKRVG) has biased composition (basic residues). Over residues 40-49 (SRSGSRMMRG) the composition is skewed to low complexity.

Belongs to the universal ribosomal protein uL15 family. In terms of assembly, part of the 50S ribosomal subunit.

In terms of biological role, binds to the 23S rRNA. The protein is Large ribosomal subunit protein uL15 of Koribacter versatilis (strain Ellin345).